We begin with the raw amino-acid sequence, 380 residues long: Chaperone protein DnaJ (380 aa).

In terms of domain architecture, J spans 5-69 (DYYEILGVSK…QKRAHYDQFG (65 aa)). Residues 135 to 217 (GKETDIEIPS…CGGTGRVKRR (83 aa)) form a CR-type zinc finger. Residues Cys-148, Cys-151, Cys-165, Cys-168, Cys-191, Cys-194, Cys-205, and Cys-208 each contribute to the Zn(2+) site. 4 CXXCXGXG motif repeats span residues 148-155 (CNTCHGTG), 165-172 (CPHCHGAG), 191-198 (CPYCGGTG), and 205-212 (CTTCGGTG).

Belongs to the DnaJ family. As to quaternary structure, homodimer. It depends on Zn(2+) as a cofactor.

It localises to the cytoplasm. Functionally, participates actively in the response to hyperosmotic and heat shock by preventing the aggregation of stress-denatured proteins and by disaggregating proteins, also in an autonomous, DnaK-independent fashion. Unfolded proteins bind initially to DnaJ; upon interaction with the DnaJ-bound protein, DnaK hydrolyzes its bound ATP, resulting in the formation of a stable complex. GrpE releases ADP from DnaK; ATP binding to DnaK triggers the release of the substrate protein, thus completing the reaction cycle. Several rounds of ATP-dependent interactions between DnaJ, DnaK and GrpE are required for fully efficient folding. Also involved, together with DnaK and GrpE, in the DNA replication of plasmids through activation of initiation proteins. The protein is Chaperone protein DnaJ of Geobacillus stearothermophilus (Bacillus stearothermophilus).